A 124-amino-acid chain; its full sequence is Snake venom vascular endothelial growth factor toxin apiscin (124 aa).

Residues 1–24 (MAAYLLAVAILFCIQGWPSGTVQG) form the signal peptide. Pyrrolidone carboxylic acid is present on glutamine 25. 3 cysteine pairs are disulfide-bonded: cysteine 38/cysteine 80, cysteine 69/cysteine 115, and cysteine 73/cysteine 117.

It belongs to the PDGF/VEGF growth factor family. Snake venom VEGF subfamily. As to quaternary structure, homodimer; disulfide-linked. Interacts with VEGF receptor-1 (FLT1) with a high affinity, whereas it binds to VEGF receptor-2 (KDR) with a low affinity. Does not bind VEGF receptor-3 (FLT4). In terms of tissue distribution, expressed by the venom gland.

It is found in the secreted. Its function is as follows. Snake venom VEGFs that may contribute to venom dispersion and prey subjugation by inducing vascular permeability and hypotension. This protein induces an increase in capillary permeability after intradermal injection, as well as a drastic hypotensive effect after intravenous injection. The hypotension is mediated by nitric oxide (NO), which is produced by VEGF-activated endothelium NO synthase. Also induces angiogenesis in vitro. Like other crotalid VEGFs, this protein interacts with VEGF receptor-1 (FLT1) with a high affinity, whereas it binds to VEGF receptor-2 (KDR) with a low affinity. The protein is Snake venom vascular endothelial growth factor toxin apiscin of Agkistrodon piscivorus piscivorus (Eastern cottonmouth).